The following is a 267-amino-acid chain: NAD kinase 2 (267 aa).

Aspartate 52 (proton acceptor) is an active-site residue. Residues 52–53, 124–125, arginine 151, aspartate 153, 164–169, and alanine 188 each bind NAD(+); these read DG, NE, and TGYNKS.

This sequence belongs to the NAD kinase family. A divalent metal cation is required as a cofactor.

It is found in the cytoplasm. The catalysed reaction is NAD(+) + ATP = ADP + NADP(+) + H(+). In terms of biological role, involved in the regulation of the intracellular balance of NAD and NADP, and is a key enzyme in the biosynthesis of NADP. Catalyzes specifically the phosphorylation on 2'-hydroxyl of the adenosine moiety of NAD to yield NADP. This chain is NAD kinase 2, found in Geobacillus kaustophilus (strain HTA426).